Reading from the N-terminus, the 181-residue chain is Malignant T-cell-amplified sequence 1 (181 aa).

The region spanning 92 to 171 is the PUA domain; sequence LPHQQVDKGA…IGIENVHYLN (80 aa).

The protein belongs to the MCTS1 family.

It localises to the cytoplasm. In terms of biological role, plays a role as translation enhancer and involved in cell cycle regulation. The protein is Malignant T-cell-amplified sequence 1 (mcts1) of Danio rerio (Zebrafish).